The primary structure comprises 276 residues: Digeranylgeranylglyceryl phosphate synthase (276 aa).

A run of 5 helical transmembrane segments spans residues 14–34, 90–110, 144–164, 200–220, and 221–241; these read VNTL…GGAV, VVLF…AVCI, FVFG…AALA, ALAV…VPYL, and VGVF…VMVV.

The protein belongs to the UbiA prenyltransferase family. DGGGP synthase subfamily. Mg(2+) serves as cofactor.

Its subcellular location is the cell membrane. It catalyses the reaction sn-3-O-(geranylgeranyl)glycerol 1-phosphate + (2E,6E,10E)-geranylgeranyl diphosphate = 2,3-bis-O-(geranylgeranyl)-sn-glycerol 1-phosphate + diphosphate. Its pathway is membrane lipid metabolism; glycerophospholipid metabolism. In terms of biological role, prenyltransferase that catalyzes the transfer of the geranylgeranyl moiety of geranylgeranyl diphosphate (GGPP) to the C2 hydroxyl of (S)-3-O-geranylgeranylglyceryl phosphate (GGGP). This reaction is the second ether-bond-formation step in the biosynthesis of archaeal membrane lipids. This is Digeranylgeranylglyceryl phosphate synthase from Halobacterium salinarum (strain ATCC 29341 / DSM 671 / R1).